We begin with the raw amino-acid sequence, 198 residues long: T-cell surface glycoprotein CD3 epsilon chain (198 aa).

Residues 1–21 form the signal peptide; it reads MRAGTLWRVLALWLLSVAAWG. At 22-120 the chain is on the extracellular side; the sequence is QEDDDHADDY…EACMEVDLTT (99 aa). Residues 28-106 enclose the Ig-like domain; the sequence is ADDYTQKLFT…KENEHILYLK (79 aa). A disulfide bridge connects residues Cys49 and Cys90. Residues 121–141 traverse the membrane as a helical segment; that stretch reads VASIVVADVCVTLGLLLLVYY. At 142 to 198 the chain is on the cytoplasmic side; that stretch reads WSKNRKAKCKPVTRGAGAGGRPRGQNKERPPPVPNPDYEPIRKGQRDLYSGLNQRGI. The tract at residues 153–198 is disordered; the sequence is VTRGAGAGGRPRGQNKERPPPVPNPDYEPIRKGQRDLYSGLNQRGI. The segment at 166-183 is NUMB-binding region; sequence QNKERPPPVPNPDYEPIR. The region spanning 169-196 is the ITAM domain; the sequence is ERPPPVPNPDYEPIRKGQRDLYSGLNQR. The interval 170–177 is proline-rich sequence; it reads RPPPVPNP. 2 positions are modified to phosphotyrosine: Tyr179 and Tyr190.

The TCR-CD3 complex is composed of a CD3D/CD3E and a CD3G/CD3E heterodimers that preferentially associate with TCRalpha and TCRbeta, respectively, to form TCRalpha/CD3E/CD3G and TCRbeta/CD3G/CD3E trimers. In turn, the hexamer interacts with CD3Z homodimer to form the TCR-CD3 complex. Alternatively, TCRalpha and TCRbeta can be replaced by TCRgamma and TCRdelta. Interacts with CD6. Interacts (via Proline-rich sequence) with NCK1; the interaction is ligand dependent but independent of tyrosine kinase activation. In terms of processing, phosphorylated on Tyr residues after T-cell receptor triggering by LCK in association with CD4/CD8.

The protein localises to the cell membrane. Part of the TCR-CD3 complex present on T-lymphocyte cell surface that plays an essential role in adaptive immune response. When antigen presenting cells (APCs) activate T-cell receptor (TCR), TCR-mediated signals are transmitted across the cell membrane by the CD3 chains CD3D, CD3E, CD3G and CD3Z. All CD3 chains contain immunoreceptor tyrosine-based activation motifs (ITAMs) in their cytoplasmic domain. Upon TCR engagement, these motifs become phosphorylated by Src family protein tyrosine kinases LCK and FYN, resulting in the activation of downstream signaling pathways. In addition of this role of signal transduction in T-cell activation, CD3E plays an essential role in correct T-cell development. Also participates in internalization and cell surface down-regulation of TCR-CD3 complexes via endocytosis sequences present in CD3E cytosolic region. In addition to its role as a TCR coreceptor, it serves as a receptor for ITPRIPL1. Ligand recognition inhibits T-cell activation by promoting interaction with NCK1, which prevents CD3E-ZAP70 interaction and blocks the ERK-NFkB signaling cascade and calcium influx. This Oryctolagus cuniculus (Rabbit) protein is T-cell surface glycoprotein CD3 epsilon chain (CD3E).